A 155-amino-acid chain; its full sequence is SsrA-binding protein (155 aa).

A disordered region spans residues 132-155 (DKREDLKQKQMKRDVDRAIKDHMR).

Belongs to the SmpB family.

The protein localises to the cytoplasm. Functionally, required for rescue of stalled ribosomes mediated by trans-translation. Binds to transfer-messenger RNA (tmRNA), required for stable association of tmRNA with ribosomes. tmRNA and SmpB together mimic tRNA shape, replacing the anticodon stem-loop with SmpB. tmRNA is encoded by the ssrA gene; the 2 termini fold to resemble tRNA(Ala) and it encodes a 'tag peptide', a short internal open reading frame. During trans-translation Ala-aminoacylated tmRNA acts like a tRNA, entering the A-site of stalled ribosomes, displacing the stalled mRNA. The ribosome then switches to translate the ORF on the tmRNA; the nascent peptide is terminated with the 'tag peptide' encoded by the tmRNA and targeted for degradation. The ribosome is freed to recommence translation, which seems to be the essential function of trans-translation. This Oceanobacillus iheyensis (strain DSM 14371 / CIP 107618 / JCM 11309 / KCTC 3954 / HTE831) protein is SsrA-binding protein.